A 701-amino-acid chain; its full sequence is Elongation factor G (701 aa).

The tr-type G domain maps to 10 to 286; it reads NKVRNIGIMA…AVIDYLPSPL (277 aa). GTP is bound by residues 19–26, 83–87, and 137–140; these read AHIDAGKT, DTPGH, and NKMD.

Belongs to the TRAFAC class translation factor GTPase superfamily. Classic translation factor GTPase family. EF-G/EF-2 subfamily.

It localises to the cytoplasm. In terms of biological role, catalyzes the GTP-dependent ribosomal translocation step during translation elongation. During this step, the ribosome changes from the pre-translocational (PRE) to the post-translocational (POST) state as the newly formed A-site-bound peptidyl-tRNA and P-site-bound deacylated tRNA move to the P and E sites, respectively. Catalyzes the coordinated movement of the two tRNA molecules, the mRNA and conformational changes in the ribosome. This chain is Elongation factor G, found in Mycobacteroides abscessus (strain ATCC 19977 / DSM 44196 / CCUG 20993 / CIP 104536 / JCM 13569 / NCTC 13031 / TMC 1543 / L948) (Mycobacterium abscessus).